The sequence spans 247 residues: Segregation and condensation protein A (247 aa).

The protein belongs to the ScpA family. In terms of assembly, component of a cohesin-like complex composed of ScpA, ScpB and the Smc homodimer, in which ScpA and ScpB bind to the head domain of Smc. The presence of the three proteins is required for the association of the complex with DNA.

It localises to the cytoplasm. In terms of biological role, participates in chromosomal partition during cell division. May act via the formation of a condensin-like complex containing Smc and ScpB that pull DNA away from mid-cell into both cell halves. This chain is Segregation and condensation protein A, found in Bacillus cereus (strain 03BB102).